A 295-amino-acid chain; its full sequence is Proline-rich protein 32 (295 aa).

2 disordered regions span residues 10–48 (GHAPSPTAVAAAENGNREPRPSLPFQCPKDDAGSWGHPG) and 101–120 (ATGEVNSSEGPAGWRQSGQD).

This is Proline-rich protein 32 (PRR32) from Bos taurus (Bovine).